Reading from the N-terminus, the 361-residue chain is Chorismate synthase (361 aa).

The interval 37 to 59 (TEADLQHDLDRRRPGTSRYTTQR) is disordered. The segment covering 40–49 (DLQHDLDRRR) has biased composition (basic and acidic residues). Positions 48 and 54 each coordinate NADP(+). Residues 125 to 127 (RSS), 238 to 239 (NA), G278, 293 to 297 (KPTSS), and R319 each bind FMN.

This sequence belongs to the chorismate synthase family. As to quaternary structure, homotetramer. FMNH2 is required as a cofactor.

It carries out the reaction 5-O-(1-carboxyvinyl)-3-phosphoshikimate = chorismate + phosphate. The protein operates within metabolic intermediate biosynthesis; chorismate biosynthesis; chorismate from D-erythrose 4-phosphate and phosphoenolpyruvate: step 7/7. Catalyzes the anti-1,4-elimination of the C-3 phosphate and the C-6 proR hydrogen from 5-enolpyruvylshikimate-3-phosphate (EPSP) to yield chorismate, which is the branch point compound that serves as the starting substrate for the three terminal pathways of aromatic amino acid biosynthesis. This reaction introduces a second double bond into the aromatic ring system. The sequence is that of Chorismate synthase from Serratia proteamaculans (strain 568).